The sequence spans 376 residues: Mitogen-activated protein kinase 5 (376 aa).

The Protein kinase domain maps to 43–329 (VPPIRPIGRG…VEEALCYPYL (287 aa)). Residues 49 to 57 (IGRGAYGFV) and K72 each bind ATP. The active-site Proton acceptor is the D169. Phosphothreonine is present on T201. The TXY motif lies at 201-203 (TEY). Phosphotyrosine is present on Y203. Position 206 is a phosphothreonine (T206).

Belongs to the protein kinase superfamily. CMGC Ser/Thr protein kinase family. MAP kinase subfamily. Post-translationally, autophosphorylated on threonine and tyrosine residues. In terms of processing, dually phosphorylated on Thr-201 and Tyr-203, which activates the enzyme.

It catalyses the reaction L-seryl-[protein] + ATP = O-phospho-L-seryl-[protein] + ADP + H(+). The catalysed reaction is L-threonyl-[protein] + ATP = O-phospho-L-threonyl-[protein] + ADP + H(+). Activated by threonine and tyrosine phosphorylation. Activated by the MAP kinase kinase MKK2. Activated by the MAP kinase kinase MKK6 in vitro. The chain is Mitogen-activated protein kinase 5 (MPK5) from Arabidopsis thaliana (Mouse-ear cress).